The chain runs to 1000 residues: MTQNPSSDRRPDTAQSVANGETLDGALFTGLTDTAAAQDESSETSASFATIDGEDKSEVGDALDWFSDGKETDINGDEADRGIQADTQAKTLVSLENLTEEPEIDGAEFMAEAFIAENTAVEDVSPNPNPAIDTDALAALTQSAVELTPPPPINLPKVELPPMQPLAPLMAIADPDNLSPMSTSIQAPTQSGGLSLRNKAVLIALLIGLIPAGVIGGLNLSSVDRLPVPQTEQQVKDSTTKQIRDQILIGLLVTAVGAAFVAYWMVGENTKAQTALALKAKHSHRNLDQPLAVAGDELAIADQTIDALSAQVEKLRHQQDLSLKQAELLTELSRANLSDIDEIQGVIQKNLDQARALFGCERLVFYYHPRYQPEAMVVQALDLTTQGLIDSKDPHPWGQEDMPSQIVAINDTSGASISNPHRQWLEQHQVKASLTVPLHRDNYPLGLLMAHHCQRPHQWEMRERQFLQQLTEELQTTLDRANLIQERNESAQQAQILKELTLKISAAINSEQVFDIAAQEIRLALKADRVIVYRFDATWAGTVIVESVAEGYPKALGATIADPCFADSYVEKYRSGRIQATRDIYNAGLTPCHIGQLKPFEVKANLVAPINYKGNLLGLLIAHQCSGPRDWHQNEIDLFGQLTVQVGLALERSDLLAQQKIAEVEQRQMREKMQKRALELLMEVDPVSRGDLTIRAHVTEDEIGTIADSYNATIESLRRIVTQVQTAASQFTETTDTNEVAVRQLAQQANRQALDVAEALERLQAMNKSIQAVAENAAQAESAVQRATQTVDQGEDAMNRTVDGIVAIRETVAATAKQVKRLGESSQKISKVVNLIGSFADQTNLLALNAAIEAAHAGEEGRGFAVVADEVRSLARQSAEATAEIAQLVATIQAETNEVVNAMEAGTEQVVVGTKLVEETRRSLNQITAVSAQISGLVEAITSAAIEQSQTSESVTQTMALVAQIADKNSSEASGVSATFKELLAVAQSLQEAVKQFKVQ.

Positions 1-59 (MTQNPSSDRRPDTAQSVANGETLDGALFTGLTDTAAAQDESSETSASFATIDGEDKSEV) are disordered. GAF domains are found at residues 342–478 (EIQG…QTTL) and 509–650 (NSEQ…GLAL). The region spanning 671-722 (EKMQKRALELLMEVDPVSRGDLTIRAHVTEDEIGTIADSYNATIESLRRIVT) is the HAMP domain. The Methyl-accepting transducer domain occupies 727 to 963 (AASQFTETTD…SVTQTMALVA (237 aa)).

This sequence belongs to the methyl-accepting chemotaxis (MCP) protein family.

The sequence is that of Putative methyl-accepting chemotaxis protein sll0041 from Synechocystis sp. (strain ATCC 27184 / PCC 6803 / Kazusa).